The sequence spans 475 residues: Ribulose bisphosphate carboxylase large chain (475 aa).

Positions 1-2 are excised as a propeptide; it reads MV. N-acetylproline is present on Pro-3. Lys-14 carries the post-translational modification N6,N6,N6-trimethyllysine. The substrate site is built by Asn-123 and Thr-173. Lys-175 acts as the Proton acceptor in catalysis. Lys-177 provides a ligand contact to substrate. Residues Lys-201, Asp-203, and Glu-204 each contribute to the Mg(2+) site. The residue at position 201 (Lys-201) is an N6-carboxylysine. The Proton acceptor role is filled by His-294. Arg-295, His-327, and Ser-379 together coordinate substrate.

This sequence belongs to the RuBisCO large chain family. Type I subfamily. In terms of assembly, heterohexadecamer of 8 large chains and 8 small chains. Requires Mg(2+) as cofactor.

It is found in the plastid. It localises to the chloroplast. It catalyses the reaction 2 (2R)-3-phosphoglycerate + 2 H(+) = D-ribulose 1,5-bisphosphate + CO2 + H2O. It carries out the reaction D-ribulose 1,5-bisphosphate + O2 = 2-phosphoglycolate + (2R)-3-phosphoglycerate + 2 H(+). In terms of biological role, ruBisCO catalyzes two reactions: the carboxylation of D-ribulose 1,5-bisphosphate, the primary event in carbon dioxide fixation, as well as the oxidative fragmentation of the pentose substrate in the photorespiration process. Both reactions occur simultaneously and in competition at the same active site. The chain is Ribulose bisphosphate carboxylase large chain from Chlamydomonas moewusii (Chlamydomonas eugametos).